The primary structure comprises 504 residues: Sodium-coupled neutral amino acid symporter 2 (504 aa).

A disordered region spans residues Met-1–Ser-22. At Met-1–Ser-76 the chain is on the cytoplasmic side. The interval Met-1–Met-96 is regulates protein turnover upon amino acid deprivation. A phosphoserine mark is found at Ser-12, Ser-21, Ser-22, and Ser-55. The helical transmembrane segment at Val-77–Met-96 threads the bilayer. Asn-82 serves as a coordination point for Na(+). Residues Ala-97–Ala-102 lie on the Extracellular side of the membrane. The chain crosses the membrane as a helical span at residues Leu-103–Leu-123. Topologically, residues Lys-124 to Asn-158 are cytoplasmic. Residues Ile-159 to Ile-177 form a helical membrane-spanning segment. Residues Lys-178–Gly-188 are Extracellular-facing. The helical transmembrane segment at Leu-189–Leu-209 threads the bilayer. The Cytoplasmic segment spans residues Ser-210–Tyr-217. The chain crosses the membrane as a helical span at residues Leu-218 to Cys-238. Residues Lys-239–Thr-290 are Extracellular-facing. The cysteines at positions 245 and 279 are disulfide-linked. N-linked (GlcNAc...) asparagine glycans are attached at residues Asn-254, Asn-258, and Asn-272. A helical membrane pass occupies residues Val-291–Tyr-311. Residues Glu-312–Lys-327 lie on the Cytoplasmic side of the membrane. Residues Ile-328–Phe-348 traverse the membrane as a helical segment. The Extracellular segment spans residues Tyr-349–Leu-369. A helical membrane pass occupies residues Leu-370–Phe-390. Position 384 (Thr-384) interacts with Na(+). Residues Pro-391–His-411 are Cytoplasmic-facing. Residues Ser-412–Ile-432 form a helical membrane-spanning segment. Topologically, residues Arg-433–Asp-434 are extracellular. Residues Ile-435–Phe-455 traverse the membrane as a helical segment. At Tyr-456–Lys-470 the chain is on the cytoplasmic side. The chain crosses the membrane as a helical span at residues Ile-471–Leu-493. Residues Asp-494–His-504 lie on the Extracellular side of the membrane.

This sequence belongs to the amino acid/polyamine transporter 2 family. Post-translationally, polyubiquitination by NEDD4L regulates the degradation and the activity of SLC38A2. Widely expressed. Expressed in skeletal muscle and adipose tissue (at protein level). Expressed by glutamatergic and GABAergic neurons together with astrocytes and other non-neuronal cells in the cerebral cortex (at protein level). Widely expressed in the central nervous systeme where, it is enriched in the spinal cord and the brainstem nuclei, especially those of the auditory system.

It localises to the cell membrane. The enzyme catalyses L-alanine(in) + Na(+)(in) = L-alanine(out) + Na(+)(out). The catalysed reaction is glycine(in) + Na(+)(in) = glycine(out) + Na(+)(out). It carries out the reaction L-serine(in) + Na(+)(in) = L-serine(out) + Na(+)(out). It catalyses the reaction L-proline(in) + Na(+)(in) = L-proline(out) + Na(+)(out). The enzyme catalyses L-methionine(in) + Na(+)(in) = L-methionine(out) + Na(+)(out). The catalysed reaction is L-histidine(in) + Na(+)(in) = L-histidine(out) + Na(+)(out). It carries out the reaction L-asparagine(in) + Na(+)(in) = L-asparagine(out) + Na(+)(out). It catalyses the reaction L-glutamine(in) + Na(+)(in) = L-glutamine(out) + Na(+)(out). The enzyme catalyses L-threonine(in) + Na(+)(in) = L-threonine(out) + Na(+)(out). The catalysed reaction is L-leucine(in) + Na(+)(in) = L-leucine(out) + Na(+)(out). It carries out the reaction L-phenylalanine(in) + Na(+)(in) = L-phenylalanine(out) + Na(+)(out). With respect to regulation, inhibited by N-methyl-D-glucamine. Inhibited by choline. Allosteric regulation of sodium ions binding by pH. Symporter that cotransports neutral amino acids and sodium ions from the extracellular to the intracellular side of the cell membrane. The transport is pH-sensitive, Li(+)-intolerant, electrogenic, driven by the Na(+) electrochemical gradient and cotransports of neutral amino acids and sodium ions with a stoichiometry of 1:1. May function in the transport of amino acids at the blood-brain barrier. May function in the transport of amino acids in the supply of maternal nutrients to the fetus through the placenta. Maintains a key metabolic glutamine/glutamate balance underpinning retrograde signaling by dendritic release of the neurotransmitter glutamate. Transports L-proline in differentiating osteoblasts for the efficient synthesis of proline-enriched proteins and provides proline essential for osteoblast differentiation and bone formation during bone development. This chain is Sodium-coupled neutral amino acid symporter 2, found in Rattus norvegicus (Rat).